The sequence spans 101 residues: Ascorbate-specific PTS system EIIB component (101 aa).

Residues 3 to 96 (VRILAVCGNG…KLLEVIKEHF (94 aa)) enclose the PTS EIIB type-2 domain. The active-site Phosphocysteine intermediate is the cysteine 9. Cysteine 9 is modified (phosphocysteine).

Its subcellular location is the cytoplasm. The enzyme catalyses N(pros)-phospho-L-histidyl-[protein] + L-ascorbate(out) = L-ascorbate 6-phosphate(in) + L-histidyl-[protein]. In terms of biological role, the phosphoenolpyruvate-dependent sugar phosphotransferase system (sugar PTS), a major carbohydrate active transport system, catalyzes the phosphorylation of incoming sugar substrates concomitantly with their translocation across the cell membrane. The enzyme II UlaABC PTS system is involved in ascorbate transport. This chain is Ascorbate-specific PTS system EIIB component (ulaB), found in Salmonella choleraesuis (strain SC-B67).